The sequence spans 601 residues: Replication protein A 70 kDa DNA-binding subunit (601 aa).

The tract at residues 107–172 is disordered; the sequence is MPGKIGDPTP…NTPGGSSKVV (66 aa). The segment covering 124 to 135 has biased composition (low complexity); it reads APSTAPAPTARP. Positions 137-153 are enriched in polar residues; sequence QPQNGSDGSTYRPSAQS. Residues 184–268 constitute a DNA-binding region (OB); it reads WTIRARVTNK…LKNDYEMTLN (85 aa). Ser-370 is modified (phosphoserine). Residues 466 to 488 form a C4-type zinc finger; the sequence is CPSKDCNKKVVDQQNGMFRCEKC.

The protein belongs to the replication factor A protein 1 family. In terms of assembly, component of the heterotrimeric canonical replication protein A complex (RPA).

It localises to the nucleus. Its subcellular location is the PML body. Its function is as follows. As part of the heterotrimeric replication protein A complex (RPA/RP-A), binds and stabilizes single-stranded DNA intermediates, that form during DNA replication or upon DNA stress. It prevents their reannealing and in parallel, recruits and activates different proteins and complexes involved in DNA metabolism. Thereby, it plays an essential role both in DNA replication and the cellular response to DNA damage. This Danio rerio (Zebrafish) protein is Replication protein A 70 kDa DNA-binding subunit (rpa1).